A 36-amino-acid polypeptide reads, in one-letter code: Omega-agatoxin-Aa1b (36 aa).

This sequence belongs to the neurotoxin 04 (omega-agtx) family. 01 (type I omega-agtx) subfamily. As to expression, expressed by the venom gland.

It localises to the secreted. Its function is as follows. Omega-agatoxin are antagonist of voltage-gated calcium channels. They block insect neuromuscular transmission presynaptically. This toxin is a blocker of L-type calcium channels (Cav/CACNA1). This is Omega-agatoxin-Aa1b from Agelenopsis aperta (North American funnel-web spider).